The chain runs to 201 residues: Dephospho-CoA kinase (201 aa).

Positions 4-201 (IIGITGGIAS…LEGGRQDDRD (198 aa)) constitute a DPCK domain. 12-17 (ASGKST) contributes to the ATP binding site.

This sequence belongs to the CoaE family.

Its subcellular location is the cytoplasm. It catalyses the reaction 3'-dephospho-CoA + ATP = ADP + CoA + H(+). It functions in the pathway cofactor biosynthesis; coenzyme A biosynthesis; CoA from (R)-pantothenate: step 5/5. Catalyzes the phosphorylation of the 3'-hydroxyl group of dephosphocoenzyme A to form coenzyme A. This chain is Dephospho-CoA kinase, found in Streptococcus pneumoniae (strain ATCC BAA-255 / R6).